Consider the following 72-residue polypeptide: Translation initiation factor IF-1 (72 aa).

Residues 1-72 enclose the S1-like domain; it reads MAKEDSIEMQ…TKGRIVFRAR (72 aa).

This sequence belongs to the IF-1 family. In terms of assembly, component of the 30S ribosomal translation pre-initiation complex which assembles on the 30S ribosome in the order IF-2 and IF-3, IF-1 and N-formylmethionyl-tRNA(fMet); mRNA recruitment can occur at any time during PIC assembly.

It localises to the cytoplasm. One of the essential components for the initiation of protein synthesis. Stabilizes the binding of IF-2 and IF-3 on the 30S subunit to which N-formylmethionyl-tRNA(fMet) subsequently binds. Helps modulate mRNA selection, yielding the 30S pre-initiation complex (PIC). Upon addition of the 50S ribosomal subunit IF-1, IF-2 and IF-3 are released leaving the mature 70S translation initiation complex. This Idiomarina loihiensis (strain ATCC BAA-735 / DSM 15497 / L2-TR) protein is Translation initiation factor IF-1.